A 434-amino-acid polypeptide reads, in one-letter code: Mitochondrial distribution and morphology protein 10 (434 aa).

This sequence belongs to the MDM10 family. In terms of assembly, component of the ER-mitochondria encounter structure (ERMES) or MDM complex, composed of mmm1, mdm10, mdm12 and mdm34. Associates with the mitochondrial outer membrane sorting assembly machinery SAM(core) complex.

It is found in the mitochondrion outer membrane. In terms of biological role, component of the ERMES/MDM complex, which serves as a molecular tether to connect the endoplasmic reticulum and mitochondria. Components of this complex are involved in the control of mitochondrial shape and protein biogenesis and may function in phospholipid exchange. mdm10 is involved in the late assembly steps of the general translocase of the mitochondrial outer membrane (TOM complex). Functions in the tom40-specific route of the assembly of outer membrane beta-barrel proteins, including the association of tom40 with the receptor tom22 and small TOM proteins. Can associate with the SAM(core) complex as well as the mdm12-mmm1 complex, both involved in late steps of the major beta-barrel assembly pathway, that is responsible for biogenesis of all outer membrane beta-barrel proteins. May act as a switch that shuttles between both complexes and channels precursor proteins into the tom40-specific pathway. Plays a role in mitochondrial morphology and in the inheritance of mitochondria. The sequence is that of Mitochondrial distribution and morphology protein 10 (mdmB) from Aspergillus niger (strain ATCC MYA-4892 / CBS 513.88 / FGSC A1513).